The sequence spans 360 residues: MLVWLAEHLVKYYSGFNVFSYLTFRAIVSLLTALFISLWMGPRMIAHLQKLSFGQVVRNDGPESHFSKRGTPTMGGIMILTAIVISVLLWAYPSNPYVWCVLVVLVGYGVIGFVDDYRKVVRKDTKGLIARWKYFWMSVIALGVAFALYLVGKDTPATQLVVPFFKDVMPQLGLFYILLAYFVIVGTGNAVNLTDGLDGLAIMPTVFVAGGFALVAWATGNMNFASYLHIPYLRHAGELVIVCTAIVGAGLGFLWFNTYPAQVFMGDVGSLALGGALGIIAVLLRQEFLLVIMGGVFVVETLSVILQVGSFKLRGQRIFRMAPIHHHYELKGWPEPRVIVRFWIISLMLVLIGLATLKVR.

At 1 to 25 the chain is on the periplasmic side; it reads MLVWLAEHLVKYYSGFNVFSYLTFR. Residues 26–46 traverse the membrane as a helical segment; sequence AIVSLLTALFISLWMGPRMIA. The Cytoplasmic portion of the chain corresponds to 47-71; the sequence is HLQKLSFGQVVRNDGPESHFSKRGT. A helical membrane pass occupies residues 72 to 92; sequence PTMGGIMILTAIVISVLLWAY. A topological domain (periplasmic) is located at residue Pro93. A helical membrane pass occupies residues 94 to 114; it reads SNPYVWCVLVVLVGYGVIGFV. The Cytoplasmic portion of the chain corresponds to 115–131; the sequence is DDYRKVVRKDTKGLIAR. The helical transmembrane segment at 132-152 threads the bilayer; the sequence is WKYFWMSVIALGVAFALYLVG. Topologically, residues 153–167 are periplasmic; it reads KDTPATQLVVPFFKD. A helical transmembrane segment spans residues 168 to 188; that stretch reads VMPQLGLFYILLAYFVIVGTG. Topologically, residues 189–198 are cytoplasmic; the sequence is NAVNLTDGLD. The chain crosses the membrane as a helical span at residues 199–219; that stretch reads GLAIMPTVFVAGGFALVAWAT. The Periplasmic portion of the chain corresponds to 220 to 235; the sequence is GNMNFASYLHIPYLRH. The chain crosses the membrane as a helical span at residues 236-256; it reads AGELVIVCTAIVGAGLGFLWF. Residues 257–262 are Cytoplasmic-facing; the sequence is NTYPAQ. Residues 263–283 traverse the membrane as a helical segment; sequence VFMGDVGSLALGGALGIIAVL. Residues 284–287 lie on the Periplasmic side of the membrane; the sequence is LRQE. The chain crosses the membrane as a helical span at residues 288 to 308; sequence FLLVIMGGVFVVETLSVILQV. Over 309-337 the chain is Cytoplasmic; that stretch reads GSFKLRGQRIFRMAPIHHHYELKGWPEPR. A helical transmembrane segment spans residues 338 to 358; it reads VIVRFWIISLMLVLIGLATLK. Residues 359-360 lie on the Periplasmic side of the membrane; sequence VR.

This sequence belongs to the glycosyltransferase 4 family. MraY subfamily. It depends on Mg(2+) as a cofactor.

It is found in the cell inner membrane. The enzyme catalyses UDP-N-acetyl-alpha-D-muramoyl-L-alanyl-gamma-D-glutamyl-meso-2,6-diaminopimeloyl-D-alanyl-D-alanine + di-trans,octa-cis-undecaprenyl phosphate = di-trans,octa-cis-undecaprenyl diphospho-N-acetyl-alpha-D-muramoyl-L-alanyl-D-glutamyl-meso-2,6-diaminopimeloyl-D-alanyl-D-alanine + UMP. It functions in the pathway cell wall biogenesis; peptidoglycan biosynthesis. In terms of biological role, catalyzes the initial step of the lipid cycle reactions in the biosynthesis of the cell wall peptidoglycan: transfers peptidoglycan precursor phospho-MurNAc-pentapeptide from UDP-MurNAc-pentapeptide onto the lipid carrier undecaprenyl phosphate, yielding undecaprenyl-pyrophosphoryl-MurNAc-pentapeptide, known as lipid I. This chain is Phospho-N-acetylmuramoyl-pentapeptide-transferase, found in Escherichia coli O157:H7.